The sequence spans 313 residues: Ribosomal RNA small subunit methyltransferase H (313 aa).

S-adenosyl-L-methionine-binding positions include 35 to 37, aspartate 55, phenylalanine 79, aspartate 100, and glutamine 107; that span reads GGH.

Belongs to the methyltransferase superfamily. RsmH family.

The protein localises to the cytoplasm. The enzyme catalyses cytidine(1402) in 16S rRNA + S-adenosyl-L-methionine = N(4)-methylcytidine(1402) in 16S rRNA + S-adenosyl-L-homocysteine + H(+). Specifically methylates the N4 position of cytidine in position 1402 (C1402) of 16S rRNA. This Burkholderia ambifaria (strain MC40-6) protein is Ribosomal RNA small subunit methyltransferase H.